We begin with the raw amino-acid sequence, 164 residues long: uncharacterized protein (164 aa).

Polar residues predominate over residues 1–29 (MLCVRSSSSNLESDTYLSRYSTRASAGTG). Residues 1–62 (MLCVRSSSSN…SKPSNNKNID (62 aa)) form a disordered region. Over residues 43-62 (SSDSSSSSSESKPSNNKNID) the composition is skewed to low complexity.

This is an uncharacterized protein from Schizosaccharomyces pombe (strain 972 / ATCC 24843) (Fission yeast).